We begin with the raw amino-acid sequence, 776 residues long: Protein SEY1 (776 aa).

The Cytoplasmic portion of the chain corresponds to 1–681 (MADRSAIQLI…KRSIITTRTH (681 aa)). One can recognise a GB1/RHD3-type G domain in the interval 34 to 263 (GLDYHVISVF…TENYYFKPQY (230 aa)). 44–51 (GSQSSGKS) contributes to the GTP binding site. Residues 682–702 (IPPWIYVLLAVLGWNEFVAVI) traverse the membrane as a helical segment. Topologically, residues 703–705 (RNP) are lumenal. Residues 706–726 (LFVTLTLILGATFFVIHKFGL) form a helical membrane-spanning segment. The Cytoplasmic portion of the chain corresponds to 727 to 776 (WGPVVNVVQSAVGETRTAIKDKLRQFVVEDHEVKESFEMKDFSKNEQKEK).

Belongs to the TRAFAC class dynamin-like GTPase superfamily. GB1/RHD3 GTPase family. RHD3 subfamily. Interacts with RTN1 and YOP1; GTP binding is not required for these interactions.

The protein localises to the endoplasmic reticulum membrane. Cooperates with the reticulon proteins RTN1 and RTN2 and the tubule-shaping DP1 family protein YOP1 to generate and maintain the structure of the tubular endoplasmic reticulum network. Has GTPase activity, which is required for its function in ER organization. This is Protein SEY1 from Saccharomyces cerevisiae (strain RM11-1a) (Baker's yeast).